The following is a 30-amino-acid chain: Rothein 3.1 (30 aa).

Residue Leu-30 is modified to Leucine amide.

Expressed by the skin dorsal glands.

Its subcellular location is the secreted. Its function is as follows. Lacks antimicrobial activity. Does not inhibit the formation of NO by neuronal nitric oxide. This chain is Rothein 3.1, found in Litoria rothii (Roth's tree frog).